A 517-amino-acid polypeptide reads, in one-letter code: MIESLIALIAAIVGLGIGYLVAKKINDAKYEIFVEQAKAKAKAIEYEAELILKDAKNSILNAELEVKKKYEEKTHKIQKDFNQKLDDLFKKEQKLQQEEEKLKEDKEYLCKSQKHIQDLQSDVDKLKNKYQEKLDDVLKILEHSTRLTQNEAKEIILKKVEENSREQIAHIVRKYEEEAKNEAKRKANFIIAQATSRFAGEFAAERLINVINIKNDELKGRIIGKEGRNVKTLEMVLGVDIIIDDTPGAIIVSCFNLYRRAIATKVIELLVEDGRIQPARIEEIHEKVCKEFDSAILEEGEIIVMDLGLNKIHPEIVKLIGKLKYRASYGQNALAHSLEVAHLAGIIAAECGGDENLARRAGILHDIGKALTHDFEGSHVDLGAELCNRYKEHPVVINAIYAHHGHEEATSIESAAVCAADTLSAARPGARREVLEAFLKRVSELEDIAKSKEGIKNAYAINAGREIRIIANAQLVNDDESVLLAKEIAAEIQEKMQYPGEIKVNVIRELRAIEYAK.

Residues 1–21 form a helical membrane-spanning segment; the sequence is MIESLIALIAAIVGLGIGYLV. The KH domain occupies 207–273; that stretch reads LINVINIKND…TKVIELLVED (67 aa). Residues 333–426 enclose the HD domain; it reads ALAHSLEVAH…VCAADTLSAA (94 aa).

It belongs to the RNase Y family.

Its subcellular location is the cell membrane. Endoribonuclease that initiates mRNA decay. This is Ribonuclease Y from Campylobacter jejuni subsp. doylei (strain ATCC BAA-1458 / RM4099 / 269.97).